The following is a 381-amino-acid chain: Alcohol dehydrogenase class-3 (381 aa).

Cys-49 provides a ligand contact to Zn(2+). His-50 contacts NAD(+). Residues Thr-51 and His-71 each contribute to the an alcohol site. Zn(2+)-binding residues include His-71, Glu-72, Cys-101, Cys-104, Cys-107, Cys-115, and Cys-179. NAD(+)-binding positions include 204–209, Asp-228, Lys-233, Ile-274, 297–299, 322–324, and Arg-374; these read GLGTVG, VGV, and TAF.

It belongs to the zinc-containing alcohol dehydrogenase family. Class-III subfamily. As to quaternary structure, homodimer. Zn(2+) serves as cofactor.

It is found in the cytoplasm. It carries out the reaction a primary alcohol + NAD(+) = an aldehyde + NADH + H(+). The catalysed reaction is a secondary alcohol + NAD(+) = a ketone + NADH + H(+). It catalyses the reaction S-(hydroxymethyl)glutathione + NADP(+) = S-formylglutathione + NADPH + H(+). The enzyme catalyses S-(hydroxymethyl)glutathione + NAD(+) = S-formylglutathione + NADH + H(+). The polypeptide is Alcohol dehydrogenase class-3 (Oryza sativa subsp. japonica (Rice)).